Reading from the N-terminus, the 230-residue chain is Large ribosomal subunit protein uL3 (230 aa).

2 disordered regions span residues 125–149 and 210–230; these read QAIGPRSHGGGGGSKPIRQTGSLGD and PNPKNPVSLFVPNSDKEVKNE.

Belongs to the universal ribosomal protein uL3 family. In terms of assembly, part of the 50S ribosomal subunit. Forms a cluster with proteins L14 and L19.

Functionally, one of the primary rRNA binding proteins, it binds directly near the 3'-end of the 23S rRNA, where it nucleates assembly of the 50S subunit. This is Large ribosomal subunit protein uL3 from Mesomycoplasma hyopneumoniae (strain J / ATCC 25934 / NCTC 10110) (Mycoplasma hyopneumoniae).